We begin with the raw amino-acid sequence, 144 residues long: Small ribosomal subunit protein bS6 (144 aa).

Residues 99–144 (KASPLAPCEEKGEEGKAEDAADELTTFGMADDDDLGDDDDTVEAGI) form a disordered region. Over residues 106-117 (CEEKGEEGKAED) the composition is skewed to basic and acidic residues. The segment covering 128–144 (ADDDDLGDDDDTVEAGI) has biased composition (acidic residues).

It belongs to the bacterial ribosomal protein bS6 family.

Functionally, binds together with bS18 to 16S ribosomal RNA. This is Small ribosomal subunit protein bS6 from Magnetococcus marinus (strain ATCC BAA-1437 / JCM 17883 / MC-1).